The sequence spans 444 residues: DNA repair protein RadA (444 aa).

Residues 10-27 (CQECGYKSVKWLGKCPSC) form a C4-type zinc finger. Position 91–98 (91–98 (GEPGIGKS)) interacts with ATP. Positions 247-251 (KNRFG) match the RadA KNRFG motif motif. A lon-protease-like region spans residues 345–444 (DVFVNVAGGM…HIQEAIEVLF (100 aa)).

The protein belongs to the RecA family. RadA subfamily.

Its function is as follows. DNA-dependent ATPase involved in processing of recombination intermediates, plays a role in repairing DNA breaks. Stimulates the branch migration of RecA-mediated strand transfer reactions, allowing the 3' invading strand to extend heteroduplex DNA faster. Binds ssDNA in the presence of ADP but not other nucleotides, has ATPase activity that is stimulated by ssDNA and various branched DNA structures, but inhibited by SSB. Does not have RecA's homology-searching function. The protein is DNA repair protein RadA of Aquifex aeolicus (strain VF5).